Reading from the N-terminus, the 323-residue chain is ADP-L-glycero-D-manno-heptose-6-epimerase (323 aa).

Residues 10–11, 31–32, K38, K53, 75–79, and N92 contribute to the NADP(+) site; these read FI, DN, and EGACS. Y139 acts as the Proton acceptor in catalysis. An NADP(+)-binding site is contributed by K143. A substrate-binding site is contributed by N168. Positions 169 and 177 each coordinate NADP(+). Catalysis depends on K177, which acts as the Proton acceptor. Substrate is bound by residues D179, K186, 200-203, R213, and Y277; that span reads FGAY.

The protein belongs to the NAD(P)-dependent epimerase/dehydratase family. HldD subfamily. Homopentamer. The cofactor is NADP(+).

The catalysed reaction is ADP-D-glycero-beta-D-manno-heptose = ADP-L-glycero-beta-D-manno-heptose. The protein operates within nucleotide-sugar biosynthesis; ADP-L-glycero-beta-D-manno-heptose biosynthesis; ADP-L-glycero-beta-D-manno-heptose from D-glycero-beta-D-manno-heptose 7-phosphate: step 4/4. Functionally, catalyzes the interconversion between ADP-D-glycero-beta-D-manno-heptose and ADP-L-glycero-beta-D-manno-heptose via an epimerization at carbon 6 of the heptose. The protein is ADP-L-glycero-D-manno-heptose-6-epimerase of Hydrogenovibrio crunogenus (strain DSM 25203 / XCL-2) (Thiomicrospira crunogena).